Reading from the N-terminus, the 219-residue chain is 2-C-methyl-D-erythritol 4-phosphate cytidylyltransferase (219 aa).

It belongs to the IspD/TarI cytidylyltransferase family. IspD subfamily.

The enzyme catalyses 2-C-methyl-D-erythritol 4-phosphate + CTP + H(+) = 4-CDP-2-C-methyl-D-erythritol + diphosphate. It functions in the pathway isoprenoid biosynthesis; isopentenyl diphosphate biosynthesis via DXP pathway; isopentenyl diphosphate from 1-deoxy-D-xylulose 5-phosphate: step 2/6. Its function is as follows. Catalyzes the formation of 4-diphosphocytidyl-2-C-methyl-D-erythritol from CTP and 2-C-methyl-D-erythritol 4-phosphate (MEP). The sequence is that of 2-C-methyl-D-erythritol 4-phosphate cytidylyltransferase from Chlamydia trachomatis serovar L2 (strain ATCC VR-902B / DSM 19102 / 434/Bu).